Reading from the N-terminus, the 260-residue chain is Phosphate import ATP-binding protein PstB (260 aa).

Residues Ile-14–Ile-255 form the ABC transporter domain. Gly-46–Ser-53 serves as a coordination point for ATP.

The protein belongs to the ABC transporter superfamily. Phosphate importer (TC 3.A.1.7) family. The complex is composed of two ATP-binding proteins (PstB), two transmembrane proteins (PstC and PstA) and a solute-binding protein (PstS).

It is found in the cell inner membrane. It catalyses the reaction phosphate(out) + ATP + H2O = ADP + 2 phosphate(in) + H(+). Functionally, part of the ABC transporter complex PstSACB involved in phosphate import. Responsible for energy coupling to the transport system. This is Phosphate import ATP-binding protein PstB from Borreliella afzelii (strain PKo) (Borrelia afzelii).